Consider the following 187-residue polypeptide: tRNA (mnm(5)s(2)U34)-methyltransferase (187 aa).

S-adenosyl-L-methionine contacts are provided by N31, N33, D51, Q53, H77, and E78.

It belongs to the methyltransferase superfamily. MnmM family. In terms of assembly, homodimer.

The enzyme catalyses 5-aminomethyl-2-thiouridine(34) in tRNA + S-adenosyl-L-methionine = 5-methylaminomethyl-2-thiouridine(34) in tRNA + S-adenosyl-L-homocysteine + H(+). The protein operates within tRNA modification. Its function is as follows. Involved in the biosynthesis of 5-methylaminomethyl-2-thiouridine (mnm(5)s(2)U) at the wobble position (U34) in tRNA. Catalyzes the transfer of a methyl group from S-adenosyl-L-methionine to nm(5)s(2)U34 to form mnm(5)s(2)U34. In Staphylococcus aureus (strain NCTC 8325 / PS 47), this protein is tRNA (mnm(5)s(2)U34)-methyltransferase.